Here is a 241-residue protein sequence, read N- to C-terminus: Xyloglucan-specific endo-beta-1,4-glucanase 1 (241 aa).

An N-terminal signal peptide occupies residues 1–19 (MKGLLAGTIAAATFAVASA). Glutamate 136 is a catalytic residue. N-linked (GlcNAc...) asparagine glycosylation is found at asparagine 174 and asparagine 190. Residue glutamate 222 is part of the active site.

The protein belongs to the glycosyl hydrolase 12 (cellulase H) family. In terms of assembly, interacts with host apoplastic glucanase inhibitor GIP2.

It catalyses the reaction xyloglucan + H2O = xyloglucan oligosaccharides.. With respect to regulation, the xyloglucanase activity is inhibited by the binding of the host apoplastic glucanase inhibitor GIP2. In terms of biological role, glycoside hydrolase that exhibits xyloglucanase activity. Acts as an important virulence factor during P.parasitica infection of its host Nicotiana benthamiana. Also acts as a pathogen-associated molecular pattern (PAMP) in host species, where it can trigger defense responses including cell death. The PAMP activity is independent of its xyloglucanase activity. With paralog XLP1, is required to elevate apoplastic sugar during P.parasitica infection. In Phytophthora nicotianae (strain INRA-310) (Phytophthora parasitica), this protein is Xyloglucan-specific endo-beta-1,4-glucanase 1.